Here is a 357-residue protein sequence, read N- to C-terminus: GTPase Obg (357 aa).

The 159-residue stretch at 1–159 folds into the Obg domain; that stretch reads MKFVDEAFID…RNLKLELKVL (159 aa). The 175-residue stretch at 160–334 folds into the OBG-type G domain; it reads ADVGLLGMPN…LIQAIYQHVR (175 aa). GTP-binding positions include 166–173, 191–195, 213–216, 284–287, and 315–317; these read GMPNAGKS, FTTLH, DIPG, NKLD, and SAL. Mg(2+) is bound by residues serine 173 and threonine 193.

Belongs to the TRAFAC class OBG-HflX-like GTPase superfamily. OBG GTPase family. As to quaternary structure, monomer. It depends on Mg(2+) as a cofactor.

The protein resides in the cytoplasm. Functionally, an essential GTPase which binds GTP, GDP and possibly (p)ppGpp with moderate affinity, with high nucleotide exchange rates and a fairly low GTP hydrolysis rate. Plays a role in control of the cell cycle, stress response, ribosome biogenesis and in those bacteria that undergo differentiation, in morphogenesis control. The sequence is that of GTPase Obg from Paracidovorax citrulli (strain AAC00-1) (Acidovorax citrulli).